The sequence spans 173 residues: Calcium-binding protein 5 (173 aa).

EF-hand domains lie at 28 to 63, 82 to 99, 105 to 140, and 142 to 173; these read DELD…MGYM, GRVD…KLLA, IGVQ…LLGE, and LTPR…MMSR. Ca(2+)-binding residues include aspartate 41, aspartate 43, aspartate 45, and aspartate 52. The Ca(2+) site is built by aspartate 118, asparagine 120, aspartate 122, glutamate 124, glutamate 129, aspartate 155, asparagine 157, aspartate 159, threonine 161, and glutamate 166.

As to quaternary structure, interacts with CACNA1C (via C-terminal CDB motif) in a calcium-dependent manner. Interacts with STXBP1. Interacts with MYO6. In terms of tissue distribution, expressed in inner and outer plexiform layers of the retina, and retinal bipolar cells (at protein level). Expressed in the inner hair cells (IHC) of the cochlea.

The protein localises to the cytoplasm. Inhibits calcium-dependent inactivation of L-type calcium channel and shifts voltage dependence of activation to more depolarized membrane potentials. Involved in the transmission of light signals. May positively regulate neurotransmitter vesicle endocytosis and exocytosis in a salt-dependent manner. May play a role in the extension and network organization of neurites. This chain is Calcium-binding protein 5 (Cabp5), found in Mus musculus (Mouse).